Consider the following 80-residue polypeptide: Raniseptin-4 (80 aa).

The first 22 residues, 1–22, serve as a signal peptide directing secretion; that stretch reads MAFLKKSLFLVLFLGIVSLSIC. The propeptide occupies 23–49; the sequence is EEEKREGEEEEKQEEENEELSEEELRD.

The protein belongs to the frog skin active peptide (FSAP) family. Dermaseptin subfamily. As to expression, expressed by the skin glands.

The protein localises to the secreted. Has antibacterial activity. In Boana raniceps (Chaco tree frog), this protein is Raniseptin-4.